A 72-amino-acid polypeptide reads, in one-letter code: Toxin Acra II-2 (72 aa).

Positions 3-67 constitute an LCN-type CS-alpha/beta domain; that stretch reads VPGNYPLNTN…VWNAAKNYCK (65 aa). 3 disulfide bridges follow: cysteine 18-cysteine 41, cysteine 27-cysteine 46, and cysteine 31-cysteine 48.

Belongs to the long (3 C-C) scorpion toxin superfamily. Sodium channel inhibitor family. Beta subfamily. As to expression, expressed by the venom gland.

The protein localises to the secreted. In terms of biological role, binds to sodium channels (Nav) and affects the channel activation process. In Androctonus crassicauda (Arabian fat-tailed scorpion), this protein is Toxin Acra II-2.